The sequence spans 385 residues: L-arabinitol 4-dehydrogenase (385 aa).

8 residues coordinate Zn(2+): cysteine 54, histidine 79, glutamate 80, cysteine 109, cysteine 112, cysteine 115, cysteine 123, and glutamate 164. NAD(+) is bound by residues 191 to 192 (PI), aspartate 212, arginine 217, isoleucine 292, and 316 to 318 (QYR).

It belongs to the zinc-containing alcohol dehydrogenase family. Homotetramer. The cofactor is Zn(2+).

The enzyme catalyses L-arabinitol + NAD(+) = L-xylulose + NADH + H(+). Its pathway is carbohydrate degradation; L-arabinose degradation via L-arabinitol; D-xylulose 5-phosphate from L-arabinose (fungal route): step 2/5. Functionally, catalyzes the NAD-dependent oxidation of L-arabinitol to L-xylulose in the fungal L-arabinose catabolic pathway. L-arabinose catabolism is important for using plant material as a carbon source. NADP cannot act as a cosubstrate. This Penicillium rubens (strain ATCC 28089 / DSM 1075 / NRRL 1951 / Wisconsin 54-1255) (Penicillium chrysogenum) protein is L-arabinitol 4-dehydrogenase (lad1).